We begin with the raw amino-acid sequence, 55 residues long: UPF0391 membrane protein RALTA_A0099 (55 aa).

The next 2 helical transmembrane spans lie at 5–25 and 30–50; these read ALVF…GIAA and IAKI…VMGL.

It belongs to the UPF0391 family.

The protein localises to the cell membrane. This Cupriavidus taiwanensis (strain DSM 17343 / BCRC 17206 / CCUG 44338 / CIP 107171 / LMG 19424 / R1) (Ralstonia taiwanensis (strain LMG 19424)) protein is UPF0391 membrane protein RALTA_A0099.